Consider the following 468-residue polypeptide: MERERLVLKVTALQACIRGFLVRRQFQSLRGEYEAIVQEIEGDLGTLQWTEGWIPRPRFLPKKAKSCQTWKATGERAPNPEQELWSRFACKETEKETIREDMILKKSGESFTNASSLPCRDASAWSQDEQSRRTGKPSQETRDVSRKNDPEAAGPGLFHSQTELQELQNHRSHLAMELLWLQQAINSRKEYLVLKQTLRSPEVNQNRHEPSLCQEHGGQSCEKAGSQPGPPLEDQPYRGRTPGEPGHVDASCWRLRSQAHKFPEGLATPDKITAGAKYRDPSYRWPGPQLPTLSEYQATGKRLTKELDCGEEISGETCLQLTTLLEDESHKELKSKGSCPGKARTQLPTLHKDPNIEDNSPRGPCPKELDWQRAVPQELGVSEDHVTWDGSLAEHGGLDLWKNKPPKGQTPSDKSSIERSPSESSHEGWQNQRAVPFRSRPPEKLSTGSGHTGEDHWRGRQWKTGPAG.

One can recognise an IQ domain in the interval 6–35; the sequence is LVLKVTALQACIRGFLVRRQFQSLRGEYEA. Disordered regions lie at residues 113-157, 202-245, and 329-468; these read NASS…GPGL, EVNQ…PGEP, and SHKE…GPAG. Over residues 139 to 150 the composition is skewed to basic and acidic residues; that stretch reads QETRDVSRKNDP. The segment covering 415-426 has biased composition (basic and acidic residues); the sequence is SSIERSPSESSH.

The sequence is that of IQ domain-containing protein C (IQCC) from Bos taurus (Bovine).